Consider the following 606-residue polypeptide: Kelch-like protein 41 (606 aa).

Serine 3 is modified (phosphoserine). Positions 33–100 (IDCTLKAGDK…LYSASIDLND (68 aa)) constitute a BTB domain. The BACK domain maps to 135–237 (CLAILRLGLL…AEKYFKDHVE (103 aa)). 5 Kelch repeats span residues 346–398 (QVYV…EVDD), 399–447 (KIYV…SHNG), 448–495 (MIYC…IHKG), 497–542 (IVIA…SLAG), and 544–599 (LYAI…TRLN).

In terms of assembly, interacts with NRAP. Part of a complex that contains CUL3, RBX1 and KLHL41. Interacts with LASP1. In terms of processing, ubiquitinated by E3 ubiquitin ligase complex formed by CUL3 and RBX1 and probably targeted for proteasome-independent degradation. Quinone-induced oxidative stress increases its ubiquitination. In terms of tissue distribution, skeletal muscle. Localized between laterally fusing myofibrils in skeletal muscle (at protein level). Expressed at a lower level in the heart compared to skeletal muscle.

The protein resides in the cytoplasm. Its subcellular location is the cytoskeleton. It localises to the cell projection. The protein localises to the pseudopodium. It is found in the ruffle. The protein resides in the myofibril. Its subcellular location is the sarcomere. It localises to the m line. The protein localises to the sarcoplasmic reticulum membrane. It is found in the endoplasmic reticulum membrane. Functionally, involved in skeletal muscle development and differentiation. Regulates proliferation and differentiation of myoblasts and plays a role in myofibril assembly by promoting lateral fusion of adjacent thin fibrils into mature, wide myofibrils. Required for pseudopod elongation in transformed cells. The sequence is that of Kelch-like protein 41 (Klhl41) from Mus musculus (Mouse).